The following is a 90-amino-acid chain: UPF0184 protein (90 aa).

The stretch at 16-78 (DETKEEMVEL…QSLETEQNTE (63 aa)) forms a coiled coil. Residues 57-90 (SQQARQELQAERQSLETEQNTEPSTKSDQEQKKQ) form a disordered region. The span at 81–90 (TKSDQEQKKQ) shows a compositional bias: basic and acidic residues.

It belongs to the UPF0184 (EST00098) family.

The chain is UPF0184 protein from Branchiostoma floridae (Florida lancelet).